Reading from the N-terminus, the 122-residue chain is MIQTQSYLNVADNSGARKIMCIRVLGTSNPSYASIGDVIIGVVKDASPNMPVKRSDVVRAVVVRTRKALRRNDGMSIRFDDNAAVIINQDNNPRGTRVFGPIARELRDKNFSKIISLAPEVV.

This sequence belongs to the universal ribosomal protein uL14 family. In terms of assembly, part of the 50S ribosomal subunit.

The protein resides in the plastid. It is found in the chloroplast. Functionally, binds to 23S rRNA. In Porphyra purpurea (Red seaweed), this protein is Large ribosomal subunit protein uL14c.